Here is a 129-residue protein sequence, read N- to C-terminus: UPF0325 protein PC1_0937 (129 aa).

The protein belongs to the UPF0325 family.

This is UPF0325 protein PC1_0937 from Pectobacterium carotovorum subsp. carotovorum (strain PC1).